The primary structure comprises 77 residues: DNA-directed RNA polymerase subunit epsilon (77 aa).

Belongs to the RNA polymerase subunit epsilon family. In terms of assembly, RNAP is composed of a core of 2 alpha, a beta and a beta' subunit. The core is associated with a delta subunit, and at least one of epsilon or omega. When a sigma factor is associated with the core the holoenzyme is formed, which can initiate transcription.

It catalyses the reaction RNA(n) + a ribonucleoside 5'-triphosphate = RNA(n+1) + diphosphate. A non-essential component of RNA polymerase (RNAP). The protein is DNA-directed RNA polymerase subunit epsilon of Streptococcus pneumoniae (strain P1031).